Consider the following 300-residue polypeptide: Ribosomal protein bS6--L-glutamate ligase (300 aa).

In terms of domain architecture, ATP-grasp spans 104–287 (MQLLARQGID…IAGKMIRWIE (184 aa)). Residues lysine 141, 178-179 (EY), aspartate 187, and 211-213 (RSN) contribute to the ATP site. Mg(2+)-binding residues include aspartate 248, glutamate 260, and asparagine 262. Mn(2+) is bound by residues aspartate 248, glutamate 260, and asparagine 262.

It belongs to the RimK family. Requires Mg(2+) as cofactor. Mn(2+) serves as cofactor.

In terms of biological role, an L-glutamate ligase that catalyzes the ATP-dependent post-translational addition of glutamate residues to the C-terminus of ribosomal protein bS6 (RpsF). Is also able to catalyze the synthesis of poly-alpha-glutamate in vitro, via ATP hydrolysis from unprotected glutamate as substrate. The number of glutamate residues added to either RpsF or to poly-alpha-glutamate changes with pH. This chain is Ribosomal protein bS6--L-glutamate ligase, found in Shigella flexneri serotype 5b (strain 8401).